A 272-amino-acid chain; its full sequence is uncharacterized protein (272 aa).

2 helical membrane-spanning segments follow: residues 9–29 (GGDI…ASEH) and 252–272 (SHIS…ISFI).

It is found in the membrane. This is an uncharacterized protein from Caenorhabditis elegans.